Consider the following 273-residue polypeptide: Eukaryotic translation initiation factor 3 subunit G-2 (273 aa).

The 79-residue stretch at Ser193–Pro271 folds into the RRM domain.

This sequence belongs to the eIF-3 subunit G family. In terms of assembly, component of the eukaryotic translation initiation factor 3 (eIF-3) complex. The eIF-3 complex interacts with pix.

It localises to the cytoplasm. Functionally, RNA-binding component of the eukaryotic translation initiation factor 3 (eIF-3) complex, which is involved in protein synthesis of a specialized repertoire of mRNAs and, together with other initiation factors, stimulates binding of mRNA and methionyl-tRNAi to the 40S ribosome. The eIF-3 complex specifically targets and initiates translation of a subset of mRNAs involved in cell proliferation. This subunit can bind 18S rRNA. In Drosophila simulans (Fruit fly), this protein is Eukaryotic translation initiation factor 3 subunit G-2.